Here is a 490-residue protein sequence, read N- to C-terminus: Betaine aldehyde dehydrogenase (490 aa).

K(+)-binding residues include Ser-26, Ile-27, and Asp-93. Residue Gly-150 to Trp-152 coordinates NAD(+). The Charge relay system role is filled by Lys-162. NAD(+) is bound by residues Lys-176–Glu-179 and Gly-230–Thr-233. Residue Leu-246 participates in K(+) binding. Glu-252 (proton acceptor) is an active-site residue. NAD(+)-binding residues include Gly-254, Cys-286, and Glu-387. Cys-286 functions as the Nucleophile in the catalytic mechanism. Cysteine sulfenic acid (-SOH) is present on Cys-286. K(+) contacts are provided by Lys-457 and Gly-460. Residue Glu-464 is the Charge relay system of the active site.

The protein belongs to the aldehyde dehydrogenase family. Dimer of dimers. K(+) is required as a cofactor.

The enzyme catalyses betaine aldehyde + NAD(+) + H2O = glycine betaine + NADH + 2 H(+). It functions in the pathway amine and polyamine biosynthesis; betaine biosynthesis via choline pathway; betaine from betaine aldehyde: step 1/1. Functionally, involved in the biosynthesis of the osmoprotectant glycine betaine. Catalyzes the irreversible oxidation of betaine aldehyde to the corresponding acid. This Acinetobacter baumannii (strain ACICU) protein is Betaine aldehyde dehydrogenase.